The primary structure comprises 585 residues: Bestrophin-1 (585 aa).

Residues 1–31 (MTITYTSQVANARLGSFSRLLLCWRGSIYKL) lie on the Cytoplasmic side of the membrane. Ala10 contributes to the Ca(2+) binding site. A helical membrane pass occupies residues 32-51 (LYGEFFIFLLCYYIIRFIYR). Over 52-60 (LALTEEQQL) the chain is Extracellular. The chain crosses the membrane as a helical span at residues 61 to 82 (MFEKLTLYCDSYIQLIPISFVL). At 83-237 (GFYVTLVVTR…DWISIPLVYT (155 aa)) the chain is on the cytoplasmic side. A helical membrane pass occupies residues 238–255 (QVVTVAVYSFFLTCLVGR). Topologically, residues 256 to 274 (QFLNPAKAYPGHELDLVVP) are extracellular. Residues 275 to 288 (VFTFLQFFFYVGWL) form a helical membrane-spanning segment. At 289–585 (KVAEQLINPF…ALENRDEAHS (297 aa)) the chain is on the cytoplasmic side. 4 residues coordinate Ca(2+): Gln293, Asn296, Asp301, and Asp304. An auto-inhibitory segment region spans residues 346–379 (PYTAASAQFRRASFMGSTFNISLNKEEMEFQPNQ).

It belongs to the anion channel-forming bestrophin (TC 1.A.46) family. Calcium-sensitive chloride channel subfamily. As to quaternary structure, interacts with YWHAG; this interaction promotes the ligand-gated L-glutamate channel activity leading to the positive regulation of NMDA glutamate receptor activity through the L-glutamate secretion.

It is found in the cell membrane. Its subcellular location is the basolateral cell membrane. The catalysed reaction is chloride(in) = chloride(out). It carries out the reaction hydrogencarbonate(in) = hydrogencarbonate(out). It catalyses the reaction 4-aminobutanoate(in) = 4-aminobutanoate(out). The enzyme catalyses L-glutamate(out) = L-glutamate(in). Ligand-gated anion channel that allows the movement of anions across cell membranes when activated by calcium (Ca2+). Allows the movement of chloride and hydrogencarbonate. Found in a partially open conformation leading to significantly smaller chloride movement. Upon F2R/PAR-1 activation, the sequestered calcium is released into the cytosol of astrocytes, leading to the (Ca2+)-dependent release of L-glutamate into the synaptic cleft that targets the neuronal postsynaptic GRIN2A/NMDAR receptor resulting in the synaptic plasticity regulation. Upon activation of the norepinephrine-alpha-1 adrenergic receptor signaling pathway, transports as well D-serine than L-glutamate in a (Ca2+)-dependent manner, leading to activation of adjacent NMDAR receptors and therefore regulates the heterosynaptic long-term depression and metaplasticity during initial memory acquisition. Releases the 4-aminobutanoate neurotransmitter in a (Ca2+)-dependent manner, and participates in its tonic release from cerebellar glial cells. The protein is Bestrophin-1 (BEST1) of Macaca fascicularis (Crab-eating macaque).